The following is a 124-amino-acid chain: Basic leucine zipper transcriptional factor ATF-like (124 aa).

Positions 1–23 (MAQGSDNNDTSYTKSPSPGNKQG) are enriched in polar residues. Positions 1 to 60 (MAQGSDNNDTSYTKSPSPGNKQGSSDDMRKVMRREKNRIAAQKSRMRQTQKADSLHLESE) are disordered. The bZIP domain maps to 27–90 (DMRKVMRREK…KYLSTVLSNH (64 aa)). A basic motif region spans residues 29-51 (RKVMRREKNRIAAQKSRMRQTQK). The interval 55-83 (LHLESESLEKENAALRKEVKRLTEEAKYL) is leucine-zipper.

This sequence belongs to the bZIP family.

It is found in the nucleus. Its subcellular location is the cytoplasm. AP-1 family transcription factor that controls the differentiation of lineage-specific cells in the immune system: specifically mediates the differentiation of T-helper 17 cells (Th17), follicular T-helper cells (TfH), CD8(+) dendritic cells and class-switch recombination (CSR) in B-cells. This is Basic leucine zipper transcriptional factor ATF-like (batf) from Danio rerio (Zebrafish).